The chain runs to 507 residues: ATP synthase subunit beta (507 aa).

Residues 1–22 (MSSLANKAKSKGKSSKSKSNVN) form a disordered region. Residue 183-190 (GGAGVGKT) participates in ATP binding.

The protein belongs to the ATPase alpha/beta chains family. As to quaternary structure, F-type ATPases have 2 components, CF(1) - the catalytic core - and CF(0) - the membrane proton channel. CF(1) has five subunits: alpha(3), beta(3), gamma(1), delta(1), epsilon(1). CF(0) has three main subunits: a(1), b(2) and c(9-12). The alpha and beta chains form an alternating ring which encloses part of the gamma chain. CF(1) is attached to CF(0) by a central stalk formed by the gamma and epsilon chains, while a peripheral stalk is formed by the delta and b chains.

The protein resides in the cell inner membrane. It catalyses the reaction ATP + H2O + 4 H(+)(in) = ADP + phosphate + 5 H(+)(out). Produces ATP from ADP in the presence of a proton gradient across the membrane. The catalytic sites are hosted primarily by the beta subunits. The protein is ATP synthase subunit beta of Ehrlichia canis (strain Jake).